Here is a 343-residue protein sequence, read N- to C-terminus: Dipeptide transport system permease protein DppC (343 aa).

The next 5 helical transmembrane spans lie at 44-64 (LVAM…AFVV), 144-164 (LIIA…YGII), 195-215 (LALL…LFAW), 259-279 (GVIV…EAVL), and 309-329 (FQLI…IFFG). One can recognise an ABC transmembrane type-1 domain in the interval 140–329 (LRISLIIALA…VLSLTFIFFG (190 aa)).

Belongs to the binding-protein-dependent transport system permease family. OppBC subfamily. As to quaternary structure, the complex is composed of two ATP-binding proteins (DppD and DppF), two transmembrane proteins (DppB and DppC) and a solute-binding protein (DppA).

It is found in the cell membrane. Functionally, part of the ABC transporter DppABCDF involved in dipeptide transport. Responsible for the translocation of the substrate across the membrane. The protein is Dipeptide transport system permease protein DppC of Lactococcus lactis subsp. cremoris (strain MG1363).